A 423-amino-acid chain; its full sequence is Putative competence-damage inducible protein (423 aa).

The protein belongs to the CinA family.

This is Putative competence-damage inducible protein from Streptococcus thermophilus (strain ATCC BAA-491 / LMD-9).